The chain runs to 193 residues: 7-methyl-GTP pyrophosphatase (193 aa).

The active-site Proton acceptor is the aspartate 69.

Belongs to the Maf family. YceF subfamily. It depends on a divalent metal cation as a cofactor.

Its subcellular location is the cytoplasm. It carries out the reaction N(7)-methyl-GTP + H2O = N(7)-methyl-GMP + diphosphate + H(+). Nucleoside triphosphate pyrophosphatase that hydrolyzes 7-methyl-GTP (m(7)GTP). May have a dual role in cell division arrest and in preventing the incorporation of modified nucleotides into cellular nucleic acids. The chain is 7-methyl-GTP pyrophosphatase from Chromohalobacter salexigens (strain ATCC BAA-138 / DSM 3043 / CIP 106854 / NCIMB 13768 / 1H11).